Reading from the N-terminus, the 252-residue chain is Major prion protein (252 aa).

The signal sequence occupies residues 1-22; sequence MANLGCWMLFLFVATWSDLGLC. Residues 23–38 form an interaction with ADGRG6 region; the sequence is KKRPKPGGWNTGGSRY. The interval 23–229 is interaction with GRB2, ERI3 and SYN1; that stretch reads KKRPKPGGWN…ESQAYYQRGS (207 aa). Residues 26–106 are disordered; the sequence is PKPGGWNTGG…QWNKPSKPKT (81 aa). 5 tandem repeats follow at residues 51 to 58, 59 to 66, 67 to 74, 75 to 82, and 83 to 90. Residues 51–90 form a 5 X 8 AA tandem repeats of P-H-G-G-G-W-G-Q region; it reads PQGGGWGQPHGGGWGQPHGGGWGQPHGGGWGQPHGGGWGQ. Gly residues predominate over residues 52-94; the sequence is QGGGWGQPHGGGWGQPHGGGWGQPHGGGWGQPHGGGWGQGGGT. Histidine 60, glycine 61, glycine 62, histidine 68, glycine 69, glycine 70, histidine 76, glycine 77, glycine 78, histidine 84, glycine 85, and glycine 86 together coordinate Cu(2+). Residues cysteine 178 and cysteine 213 are joined by a disulfide bond. N-linked (GlcNAc...) asparagine glycosylation is found at asparagine 180 and asparagine 196. Serine 229 carries GPI-anchor amidated serine lipidation. Residues 230-252 constitute a propeptide, removed in mature form; that stretch reads SMVLFSSPPVILLISFLIFLIVG.

The protein belongs to the prion family. As to quaternary structure, monomer and homodimer. Has a tendency to aggregate into amyloid fibrils containing a cross-beta spine, formed by a steric zipper of superposed beta-strands. Soluble oligomers may represent an intermediate stage on the path to fibril formation. Copper binding may promote oligomerization. Interacts with GRB2, APP, ERI3/PRNPIP and SYN1. Mislocalized cytosolically exposed PrP interacts with MGRN1; this interaction alters MGRN1 subcellular location and causes lysosomal enlargement. Interacts with APP. Interacts with KIAA1191. Interacts with ADGRG6.

The protein localises to the cell membrane. The protein resides in the golgi apparatus. Functionally, its primary physiological function is unclear. May play a role in neuronal development and synaptic plasticity. May be required for neuronal myelin sheath maintenance. May promote myelin homeostasis through acting as an agonist for ADGRG6 receptor. May play a role in iron uptake and iron homeostasis. Soluble oligomers are toxic to cultured neuroblastoma cells and induce apoptosis (in vitro). Association with GPC1 (via its heparan sulfate chains) targets PRNP to lipid rafts. Also provides Cu(2+) or Zn(2+) for the ascorbate-mediated GPC1 deaminase degradation of its heparan sulfate side chains. This chain is Major prion protein (PRNP), found in Callithrix jacchus (White-tufted-ear marmoset).